The following is a 339-amino-acid chain: tRNA-specific 2-thiouridylase MnmA (339 aa).

Residues 8–15 and Met-34 contribute to the ATP site; that span reads AMSGGVDS. The Nucleophile role is filled by Cys-94. An intrachain disulfide couples Cys-94 to Cys-188. Gly-118 is an ATP binding site. Positions 136 to 138 are interaction with tRNA; the sequence is KDQ. Catalysis depends on Cys-188, which acts as the Cysteine persulfide intermediate. Residues 290 to 291 are interaction with tRNA; sequence RY.

This sequence belongs to the MnmA/TRMU family.

The protein resides in the cytoplasm. The catalysed reaction is S-sulfanyl-L-cysteinyl-[protein] + uridine(34) in tRNA + AH2 + ATP = 2-thiouridine(34) in tRNA + L-cysteinyl-[protein] + A + AMP + diphosphate + H(+). Catalyzes the 2-thiolation of uridine at the wobble position (U34) of tRNA, leading to the formation of s(2)U34. This is tRNA-specific 2-thiouridylase MnmA from Nitratiruptor sp. (strain SB155-2).